The chain runs to 87 residues: Mitochondrial import inner membrane translocase subunit TIM8 (87 aa).

Positions 44–68 match the Twin CX3C motif motif; that stretch reads CFKKCISRVDNGNLSSQEEECLASC. Disulfide bonds link C44-C68 and C48-C64.

It belongs to the small Tim family. Heterohexamer; composed of 3 copies of TIM8 and 3 copies of TIM13, named soluble 70 kDa complex. Associates with the TIM22 complex, whose core is composed of TIM22 and TIM54. Interacts with the transmembrane regions of multi-pass transmembrane proteins in transit.

The protein resides in the mitochondrion inner membrane. Mitochondrial intermembrane chaperone that participates in the import and insertion of some multi-pass transmembrane proteins into the mitochondrial inner membrane. Also required for the transfer of beta-barrel precursors from the TOM complex to the sorting and assembly machinery (SAM complex) of the outer membrane. Acts as a chaperone-like protein that protects the hydrophobic precursors from aggregation and guide them through the mitochondrial intermembrane space. The TIM8-TIM13 complex is non essential and only mediates the import of few proteins, while the predominant TIM9-TIM10 70 kDa complex is crucial and mediates the import of much more proteins. This Candida glabrata (strain ATCC 2001 / BCRC 20586 / JCM 3761 / NBRC 0622 / NRRL Y-65 / CBS 138) (Yeast) protein is Mitochondrial import inner membrane translocase subunit TIM8 (TIM8).